The following is a 542-amino-acid chain: 4-coumarate--CoA ligase-like 5 (542 aa).

ATP contacts are provided by Ser-204, Ser-205, Gly-206, Thr-207, Thr-208, and Lys-212. Phe-262 contacts (E)-4-coumaroyl-AMP. Arg-282 contacts CoA. Positions 284-353 are SBD1; sequence DFIAALRAIE…SVFPNVELVQ (70 aa). (E)-4-coumaroyl-AMP is bound by residues Gly-331, Gln-353, Gly-354, and Thr-358. ATP contacts are provided by Gln-353, Gly-354, Thr-358, Asp-418, and Arg-433. Residues 354–397 form an SBD2 region; it reads GYGLTESSGAVAATVGPEESKAYGSVGKLGSHLQAKIVDPSTGY. (E)-4-coumaroyl-AMP is bound by residues Lys-435 and Lys-439. Residues Lys-441 and Gly-442 each contribute to the CoA site. Lys-524 lines the ATP pocket.

Belongs to the ATP-dependent AMP-binding enzyme family. The cofactor is Mg(2+).

The enzyme catalyses (E)-4-coumarate + ATP + CoA = (E)-4-coumaroyl-CoA + AMP + diphosphate. The catalysed reaction is (E)-4-coumarate + ATP + H(+) = (E)-4-coumaroyl-AMP + diphosphate. It carries out the reaction (E)-4-coumaroyl-AMP + CoA = (E)-4-coumaroyl-CoA + AMP + H(+). In terms of biological role, carboxylate--CoA ligase that may use 4-coumarate as substrate. Follows a two-step reaction mechanism, wherein the carboxylate substrate first undergoes adenylation by ATP, followed by a thioesterification in the presence of CoA to yield the final CoA thioester. In Oryza sativa subsp. japonica (Rice), this protein is 4-coumarate--CoA ligase-like 5 (4CLL5).